Here is a 331-residue protein sequence, read N- to C-terminus: Bifunctional nuclease 1 (331 aa).

In terms of domain architecture, BFN spans Cys126–Val261. Positions Glu291–Lys326 constitute a UVR domain.

The protein belongs to the bifunctional nuclease family.

Its subcellular location is the nucleus. In terms of biological role, bifunctional nuclease with both RNase and DNase activities. Involved in basal defense response. Participates in abscisic acid-derived callose deposition following infection by a necrotrophic pathogen. This chain is Bifunctional nuclease 1 (BBD1), found in Oryza sativa subsp. japonica (Rice).